A 417-amino-acid polypeptide reads, in one-letter code: Snake venom metalloproteinase kistomin (417 aa).

An N-terminal signal peptide occupies residues 1–20; it reads MIEVLLVTICLAAFPYQGSS. Positions 21–189 are excised as a propeptide; that stretch reads IILESGNVND…KKPFRLNLTP (169 aa). The Peptidase M12B domain occupies 197 to 391; sequence AKVYLVIVAD…RKPECLFKKP (195 aa). Cystine bridges form between C308–C386, C348–C370, and C350–C353. Residue H333 coordinates Zn(2+). E334 is a catalytic residue. Zn(2+)-binding residues include H337 and H343. A propeptide spanning residues 392–417 is cleaved from the precursor; sequence LRTDTVSTPVSGNEPLEVITMDDFYA.

Belongs to the venom metalloproteinase (M12B) family. P-I subfamily. In terms of assembly, monomer. It depends on Zn(2+) as a cofactor. Expressed by the venom gland.

The protein localises to the secreted. Its activity is regulated as follows. Inhibited by EDTA, and O-phenanthrolene. Its function is as follows. Snake venom zinc metalloprotease that inhibits platelet aggregation by binding specifically to platelet glycoprotein VI (GP6) and platelet glycoprotein Ib alpha (GP1BA). It inhibits the interaction between collagen and platelet GP6 by cleaving GP6 (at '225-Glu-|-Ala-226' and '238-Val-|-Phe-239' bonds), and inhibits vWF-induced platelet aggregation by cleaving GP1BA and vWF. Cleavage of GP1BA occurs at two distinct sites to generate two soluble fragments. It also cleaves alpha- (FGA) and subsequently the gamma-chain (FGG) of fibrinogen, leaving the beta-chain unaffected. It also inhibits collagen-, convulxin- and ristocetin-induced platelet aggregation. It blocks the adhesion of platelet to immobilized collagen, but only exerts a slight inhibition to fibrinogen. In vivo, it exerts potent antithrombotic effect. This chain is Snake venom metalloproteinase kistomin, found in Calloselasma rhodostoma (Malayan pit viper).